A 298-amino-acid chain; its full sequence is MYFLILFSSNAELGEVLRTMRSVEDRFNKRFHYPWTFYGMDEFTEYFMSTTSTIASGHCEYGTKGITYTNHLQFILTISYLVHWDLSQVKPLVENNRLYQQRADALAQENLSYVYSPLFHSFQDWVVRSLLYHPQLEYDYVWRIEPGLKLVCEEKKDIFSTFKDSDIVFTNHVCERKHSGIYAMEEAIEEYKILNTQGDFSNIWVYSNNYTYCKYWPFNEILSLKQIRHNQTYTNLINYLLGSGGTYYHRWTESDILSAAFGVLRARANHMESVGFFLNDDVHYCPETIPYTGRCACL.

Residue Glu-220 is the Nucleophile of the active site.

It belongs to the glycosyltransferase 15 family.

It is found in the cytoplasm. The protein localises to the nucleus. Its function is as follows. Probable mannosyltransferase involved in O-glycosylation of cell wall and secreted proteins. The protein is O-glycoside alpha-1,2-mannosyltransferase homolog 6 (omh6) of Schizosaccharomyces pombe (strain 972 / ATCC 24843) (Fission yeast).